A 132-amino-acid chain; its full sequence is Small ribosomal subunit protein uS8 (132 aa).

The protein belongs to the universal ribosomal protein uS8 family. Part of the 30S ribosomal subunit. Contacts proteins S5 and S12.

In terms of biological role, one of the primary rRNA binding proteins, it binds directly to 16S rRNA central domain where it helps coordinate assembly of the platform of the 30S subunit. This is Small ribosomal subunit protein uS8 from Corynebacterium diphtheriae (strain ATCC 700971 / NCTC 13129 / Biotype gravis).